The chain runs to 558 residues: Nuclear speckle splicing regulatory protein 1 (558 aa).

Residues 21 to 54 form a disordered region; the sequence is PVLQKPSVFGNDSDDDDETSVSESLQREAAKKQA. A phosphoserine mark is found at serine 27 and serine 33. The stretch at 104–170 forms a coiled coil; sequence IHNLLKAVEI…REKRAAALEA (67 aa). A necessary for alternative splicing activity region spans residues 106–170; sequence NLLKAVEIRK…REKRAAALEA (65 aa). Residues lysine 199 and lysine 210 each participate in a glycyl lysine isopeptide (Lys-Gly) (interchain with G-Cter in SUMO2) cross-link. The span at 204–215 shows a compositional bias: basic and acidic residues; sequence EARSGIKEEKSR. A disordered region spans residues 204–534; that stretch reads EARSGIKEEK…KRNNEETVMS (331 aa). Positions 216-226 are enriched in polar residues; sequence GFSNEVSSKNR. Phosphoserine is present on residues serine 248, serine 254, and serine 255. Residues 250–280 are compositionally biased toward basic and acidic residues; sequence FDAKSSADDEIEETRVNCRREKVIETPENDF. The residue at position 275 (threonine 275) is a Phosphothreonine. Residue lysine 281 forms a Glycyl lysine isopeptide (Lys-Gly) (interchain with G-Cter in SUMO2) linkage. Residues 299 to 310 show a composition bias toward basic residues; sequence STRHHTKGSRTS. 3 stretches are compositionally biased toward basic and acidic residues: residues 311-442, 449-487, and 501-517; these read RGHE…KREV, RNQDRKESSPNSRAKDKFLDQERSNKMRNMAKDKERNQE, and RLTEEGQEKGKEQERPP. The stretch at 379–427 forms a coiled coil; that stretch reads KREKDREKYSQREQERDRQQNDQNRPSEKGEKEEKSKAKEEHMKVRKER. The residue at position 457 (serine 457) is a Phosphoserine.

It belongs to the NSRP1 family. As to quaternary structure, interacts (via C-terminus) with SRSF1. Interacts (via C-terminus) with SRSF2. In terms of tissue distribution, expressed in dendritic cells, T-cells, B-cells and natural killer cells. Expressed in secondary lymphoid organs such as spleen and mesenteric, axillary and brachial lymph nodes.

The protein resides in the nucleus. The protein localises to the nucleus speckle. RNA-binding protein that mediates pre-mRNA alternative splicing regulation. The polypeptide is Nuclear speckle splicing regulatory protein 1 (NSRP1) (Homo sapiens (Human)).